A 379-amino-acid polypeptide reads, in one-letter code: RIB43A-like with coiled-coils protein 1 (379 aa).

The segment at 1–21 (MYNIKQSTDTKEAAAIEARRN) is disordered. Over residues 8–21 (TDTKEAAAIEARRN) the composition is skewed to basic and acidic residues. Coiled coils occupy residues 82 to 111 (KEEA…GREF) and 216 to 304 (NANK…QAEK).

The protein belongs to the RIB43A family. In terms of assembly, microtubule inner protein component of sperm flagellar doublet microtubules.

It is found in the cytoplasm. Its subcellular location is the cytoskeleton. The protein resides in the flagellum axoneme. The chain is RIB43A-like with coiled-coils protein 1 (RIBC1) from Homo sapiens (Human).